We begin with the raw amino-acid sequence, 188 residues long: uncharacterized protein (188 aa).

A helical transmembrane segment spans residues 121–139; sequence IWLYGGASLITTFINLGLV.

This sequence to B.subtilis YwjB.

Its subcellular location is the membrane. This is an uncharacterized protein from Bacillus subtilis (strain 168).